The chain runs to 287 residues: Cuticle collagen 38 (287 aa).

Residues 1–19 (MSKYLVPVCASISLVAVFG) form the signal peptide. The tract at residues 95–287 (QGCPPGPPGP…CPCPARAKKH (193 aa)) is disordered. Pro residues predominate over residues 98-107 (PPGPPGPPGL). Collagen-like domains are found at residues 145–200 (QGPP…GSEG) and 215–273 (GQPG…SIGP). Over residues 184 to 205 (TGEQGPQGEPGTEGSEGPTGQD) the composition is skewed to low complexity. A compositionally biased stretch (gly residues) spans 206 to 215 (GTIGGPGLPG). Over residues 238 to 252 (DGEQGPQGPQGPDGQ) the composition is skewed to low complexity.

Belongs to the cuticular collagen family. In terms of assembly, collagen polypeptide chains are complexed within the cuticle by disulfide bonds and other types of covalent cross-links.

Its subcellular location is the nucleus. Functionally, probable cuticular collagen-like protein. Nematode cuticles are composed largely of collagen-like proteins. The cuticle functions both as an exoskeleton and as a barrier to protect the worm from its environment. Acts downstream of the Wnt signaling pathway, perhaps in the formation of the adult cuticle. The sequence is that of Cuticle collagen 38 from Caenorhabditis elegans.